Here is a 393-residue protein sequence, read N- to C-terminus: Translation initiation factor eIF2B subunit beta (393 aa).

The tract at residues 105 to 125 (VSSSNSSSPSQKRDIPSNEKL) is disordered. Phosphoserine occurs at positions 106, 108, and 112.

Belongs to the eIF-2B alpha/beta/delta subunits family. Component of the translation initiation factor 2B (eIF2B) complex which is a heterodecamer of two sets of five different subunits: alpha, beta, gamma, delta and epsilon. Subunits alpha, beta and delta comprise a regulatory subcomplex and subunits epsilon and gamma comprise a catalytic subcomplex. Within the complex, the hexameric regulatory complex resides at the center, with the two heterodimeric catalytic subcomplexes bound on opposite sides.

Its subcellular location is the cytoplasm. It is found in the cytosol. Acts as a component of the translation initiation factor 2B (eIF2B) complex, which catalyzes the exchange of GDP for GTP on the eukaryotic initiation factor 2 (eIF2) complex gamma subunit. Its guanine nucleotide exchange factor activity is repressed when bound to eIF2 complex phosphorylated on the alpha subunit, thereby limiting the amount of methionyl-initiator methionine tRNA available to the ribosome and consequently global translation is repressed. The sequence is that of Translation initiation factor eIF2B subunit beta (tif222) from Schizosaccharomyces pombe (strain 972 / ATCC 24843) (Fission yeast).